Here is a 453-residue protein sequence, read N- to C-terminus: Phosphoglucosamine mutase (453 aa).

The active-site Phosphoserine intermediate is Ser102. Residues Ser102, Asp243, Asp245, and Asp247 each contribute to the Mg(2+) site. At Ser102 the chain carries Phosphoserine.

The protein belongs to the phosphohexose mutase family. Mg(2+) serves as cofactor. Activated by phosphorylation.

It catalyses the reaction alpha-D-glucosamine 1-phosphate = D-glucosamine 6-phosphate. Its function is as follows. Catalyzes the conversion of glucosamine-6-phosphate to glucosamine-1-phosphate. The protein is Phosphoglucosamine mutase of Bartonella tribocorum (strain CIP 105476 / IBS 506).